The chain runs to 254 residues: MENIMNNPVIGVVMCRNRLKGHATQTLQEKYLNAIIHAGGLPIALPHALAEPSLLEQLLPKLDGIYLPGSPSNVQPHLYGENGDEPDADPERDLLSMALINAALERRIPIFAICRGLQELVVATGGSLHRKLCEQPELLEHREDPELPVEQQYAPSHEVQVEEGGLLSALLPECSNFWVNSLHGQGAKVVSPRLRVEARSPDGLVEAVSVINHPFALGVQWHPEWNSSEYALSRILFEGFITACQHHIAEKQRL.

Residues 16–250 (RNRLKGHATQ…ITACQHHIAE (235 aa)) enclose the Glutamine amidotransferase type-1 domain. Cys-114 acts as the Nucleophile in catalysis. Active-site residues include His-222 and Glu-224.

It belongs to the peptidase C26 family.

It catalyses the reaction 4-(gamma-L-glutamylamino)butanoate + H2O = 4-aminobutanoate + L-glutamate. Its pathway is amine and polyamine degradation; putrescine degradation; 4-aminobutanoate from putrescine: step 4/4. Its function is as follows. Involved in the breakdown of putrescine via hydrolysis of the gamma-glutamyl linkage of gamma-glutamyl-gamma-aminobutyrate. The protein is Gamma-glutamyl-gamma-aminobutyrate hydrolase (puuD) of Escherichia coli O157:H7.